We begin with the raw amino-acid sequence, 259 residues long: NAD kinase (259 aa).

Catalysis depends on D43, which acts as the Proton acceptor. NAD(+) contacts are provided by residues 43–44, 111–112, and R136; these read DG and NE.

This sequence belongs to the NAD kinase family. A divalent metal cation is required as a cofactor.

The protein resides in the cytoplasm. It carries out the reaction NAD(+) + ATP = ADP + NADP(+) + H(+). Involved in the regulation of the intracellular balance of NAD and NADP, and is a key enzyme in the biosynthesis of NADP. Catalyzes specifically the phosphorylation on 2'-hydroxyl of the adenosine moiety of NAD to yield NADP. The polypeptide is NAD kinase (Mycoplasma genitalium (strain ATCC 33530 / DSM 19775 / NCTC 10195 / G37) (Mycoplasmoides genitalium)).